We begin with the raw amino-acid sequence, 134 residues long: Small ribosomal subunit protein uS12 (134 aa).

Positions 1–27 (MPTIQQLVRKGRESFADKSKSPALNSC) are disordered. A compositionally biased stretch (basic and acidic residues) spans 10–20 (KGRESFADKSK). At Asp89 the chain carries 3-methylthioaspartic acid. Residues 103–134 (DTAGVNGRTQRRSKYGAKRPKPGQAPAAKGKK) are disordered. Residues 111–123 (TQRRSKYGAKRPK) show a composition bias toward basic residues. Residues 124–134 (PGQAPAAKGKK) show a composition bias toward low complexity.

Belongs to the universal ribosomal protein uS12 family. As to quaternary structure, part of the 30S ribosomal subunit. Contacts proteins S8 and S17. May interact with IF1 in the 30S initiation complex.

Its function is as follows. With S4 and S5 plays an important role in translational accuracy. In terms of biological role, interacts with and stabilizes bases of the 16S rRNA that are involved in tRNA selection in the A site and with the mRNA backbone. Located at the interface of the 30S and 50S subunits, it traverses the body of the 30S subunit contacting proteins on the other side and probably holding the rRNA structure together. The combined cluster of proteins S8, S12 and S17 appears to hold together the shoulder and platform of the 30S subunit. The sequence is that of Small ribosomal subunit protein uS12 from Porphyromonas gingivalis (strain ATCC 33277 / DSM 20709 / CIP 103683 / JCM 12257 / NCTC 11834 / 2561).